The following is an 893-amino-acid chain: Zinc finger protein 281 (893 aa).

4 disordered regions span residues 1 to 113 (MKIG…FPSQ), 126 to 148 (IKQEKPADPEEQPSHHHHHHHHY), 153 to 172 (AGAEERSPGLGGGEGGSHGV), and 198 to 251 (SGSR…GAVL). Lys2 is covalently cross-linked (Glycyl lysine isopeptide (Lys-Gly) (interchain with G-Cter in SUMO2)). The segment covering 7–36 (FLSGGGGPSSSGGSGSGGSSGSASGGSGGG) has biased composition (gly residues). Glycyl lysine isopeptide (Lys-Gly) (interchain with G-Cter in SUMO2) cross-links involve residues Lys100 and Lys127. Residues 127 to 139 (KQEKPADPEEQPS) are compositionally biased toward basic and acidic residues. Residues 161-170 (GLGGGEGGSH) are compositionally biased toward gly residues. The span at 201–216 (RTDEHGNQEPKQDANV) shows a compositional bias: basic and acidic residues. Residues Lys211, Lys217, Lys223, Lys230, Lys240, and Lys256 each participate in a glycyl lysine isopeptide (Lys-Gly) (interchain with G-Cter in SUMO2) cross-link. C2H2-type zinc fingers lie at residues 258-280 (HICDHCSAAFRSSYHLRRHVLIH), 286-308 (FQCSQCSMGFIQKYLLQRHEKIH), and 314-336 (FGCDQCSMKFIQKYHMERHKRTH). Residues Lys298 and Lys322 each participate in a glycyl lysine isopeptide (Lys-Gly) (interchain with G-Cter in SUMO2) cross-link. A C2H2-type 4; atypical zinc finger spans residues 342–364 (YKCDTCQQYFSRTDRLLKHRRTC). A Glycyl lysine isopeptide (Lys-Gly) (interchain with G-Cter in SUMO2) cross-link involves residue Lys370. The interval 371–425 (GAASAEPGSSNHNSMGNLAVLSQGNTSSSRRKSKSKSIAIENKEHKTGKTNESQM) is disordered. Positions 377–396 (PGSSNHNSMGNLAVLSQGNT) are enriched in polar residues. Phosphoserine is present on Ser392. Glycyl lysine isopeptide (Lys-Gly) (interchain with G-Cter in SUMO2) cross-links involve residues Lys406, Lys413, Lys457, and Lys474. Ser481 is modified (phosphoserine). Glycyl lysine isopeptide (Lys-Gly) (interchain with G-Cter in SUMO2) cross-links involve residues Lys490, Lys495, Lys536, Lys596, Lys614, and Lys619. The interval 613–658 (GKSETQKEDPFNLTEPRVDLHTSGEHSELVQEENLSPGTQTPSNDK) is disordered. Residues 616-641 (ETQKEDPFNLTEPRVDLHTSGEHSEL) are compositionally biased toward basic and acidic residues. The segment covering 645–658 (ENLSPGTQTPSNDK) has biased composition (polar residues). Ser648 is modified (phosphoserine). Glycyl lysine isopeptide (Lys-Gly) (interchain with G-Cter in SUMO2) cross-links involve residues Lys658 and Lys667. Residues 775 to 813 (SSAFQSSSQKLTSQKEQQKNLESSTSFQIPSQELASQID) show a composition bias toward polar residues. Residues 775 to 815 (SSAFQSSSQKLTSQKEQQKNLESSTSFQIPSQELASQIDPQ) form a disordered region. Ser782 is modified (phosphoserine). Glycyl lysine isopeptide (Lys-Gly) (interchain with G-Cter in SUMO2) cross-links involve residues Lys784, Lys789, and Lys793. Ser805 carries the phosphoserine modification. Glycyl lysine isopeptide (Lys-Gly) (interchain with G-Cter in SUMO2) cross-links involve residues Lys816 and Lys838. Position 886 is a phosphothreonine (Thr886).

It belongs to the krueppel C2H2-type zinc-finger protein family. As to quaternary structure, interacts with NANOG. Associates with the NuRD complex.

The protein localises to the nucleus. Transcription repressor that plays a role in regulation of embryonic stem cells (ESCs) differentiation. Required for ESCs differentiation and acts by mediating autorepression of NANOG in ESCs: binds to the NANOG promoter and promotes association of NANOG protein to its own promoter and recruits the NuRD complex, which deacetylates histones. Not required for establishement and maintenance of ESCs. Represses the transcription of a number of genes including GAST, ODC1 and VIM. Binds to the G-rich box in the enhancer region of these genes. In Mus musculus (Mouse), this protein is Zinc finger protein 281 (Znf281).